The sequence spans 434 residues: Pre-mRNA-splicing factor PRP46 (434 aa).

WD repeat units follow at residues 120 to 160 (GHTG…LKIT), 163 to 202 (GHVM…AIRD), 205 to 244 (GHLS…EIMV), 247 to 288 (GHKS…KVLT), 290 to 329 (HSRN…TNFQ), 331 to 369 (QNTG…KYQS), and 380 to 419 (ESER…TEDT).

This sequence belongs to the WD repeat PRL1/PRL2 family. As to quaternary structure, associated with the spliceosome.

The protein localises to the cytoplasm. It localises to the nucleus. In terms of biological role, involved in pre-mRNA splicing and required for cell cycle progression at G2/M. The sequence is that of Pre-mRNA-splicing factor PRP46 (PRP46) from Kluyveromyces lactis (strain ATCC 8585 / CBS 2359 / DSM 70799 / NBRC 1267 / NRRL Y-1140 / WM37) (Yeast).